We begin with the raw amino-acid sequence, 638 residues long: Replication protein E1 (638 aa).

Positions 84 to 86 (KRK) match the Nuclear localization signal motif. Ser-90 is modified (phosphoserine; by host). Over residues 90–119 (SQNSPLQDITNQHRQQSDSQQNTHQVNNSQ) the composition is skewed to polar residues. The tract at residues 90–133 (SQNSPLQDITNQHRQQSDSQQNTHQVNNSQAKRRAVDSVPDSGY) is disordered. Positions 176–342 (THVNSVTQIC…QTQLEHSFDD (167 aa)) are DNA-binding region. In terms of domain architecture, SF3 helicase spans 441 to 591 (VNFIYFLQVL…FPFDSNGNPV (151 aa)). Residue 467–474 (GPPNTGKS) participates in ATP binding.

It belongs to the papillomaviridae E1 protein family. In terms of assembly, can form hexamers. Interacts with E2 protein; this interaction increases E1 DNA binding specificity. Interacts with host DNA polymerase subunit POLA2. Interacts with host single stranded DNA-binding protein RPA1. Interacts with host TOP1; this interaction stimulates the enzymatic activity of TOP1. Phosphorylated.

The protein localises to the host nucleus. It carries out the reaction Couples ATP hydrolysis with the unwinding of duplex DNA by translocating in the 3'-5' direction.. It catalyses the reaction ATP + H2O = ADP + phosphate + H(+). Its function is as follows. ATP-dependent DNA 3'-5' helicase required for initiation of viral DNA replication. It forms a complex with the viral E2 protein. The E1-E2 complex binds to the replication origin which contains binding sites for both proteins. During the initial step, a dimer of E1 interacts with a dimer of protein E2 leading to a complex that binds the viral origin of replication with high specificity. Then, a second dimer of E1 displaces the E2 dimer in an ATP-dependent manner to form the E1 tetramer. Following this, two E1 monomers are added to each half of the site, which results in the formation of two E1 trimers on the viral ori. Subsequently, two hexamers will be created. The double hexamer acts as a bi-directional helicase machinery and unwinds the viral DNA and then recruits the host DNA polymerase to start replication. This is Replication protein E1 from Homo sapiens (Human).